The primary structure comprises 282 residues: S-formylglutathione hydrolase (282 aa).

At lysine 4 the chain carries N6-succinyllysine. Serine 149 serves as the catalytic Charge relay system. Lysine 200 carries the N6-acetyllysine modification. Catalysis depends on charge relay system residues aspartate 226 and histidine 260.

Belongs to the esterase D family. In terms of assembly, homodimer.

The protein resides in the cytoplasm. It is found in the cytoplasmic vesicle. The catalysed reaction is S-formylglutathione + H2O = formate + glutathione + H(+). Its function is as follows. Serine hydrolase involved in the detoxification of formaldehyde. In Rattus norvegicus (Rat), this protein is S-formylglutathione hydrolase (Esd).